A 698-amino-acid polypeptide reads, in one-letter code: Serine/alanine racemase (698 aa).

Over 1–10 (MKNKGIDQFR) the chain is Cytoplasmic. The chain crosses the membrane as a helical span at residues 11 to 31 (VIAAMMVVAIHCLPLHYLWPE). At 32–42 (GDILITLTIFR) the chain is on the extracellular side. A helical membrane pass occupies residues 43–63 (VAVPFFFMISGYYVFAELAVA). At 64-81 (NSYPSRQRVFNFIKKQLK) the chain is on the cytoplasmic side. A helical transmembrane segment spans residues 82–102 (VYLLATLMFLPLALYSQTIGF). Topologically, residues 103-121 (DLPVGTLVQVLLVNGILYH) are extracellular. The chain crosses the membrane as a helical span at residues 122–142 (LWYFPALITGSLLLTSLLIHV). The Cytoplasmic segment spans residues 143 to 147 (SFKKV). Residues 148 to 168 (FWLAAGLYLIGLGGDSWFGLI) traverse the membrane as a helical segment. Residues 169–183 (QQTPIEPFYTAVFHL) lie on the Extracellular side of the membrane. The chain crosses the membrane as a helical span at residues 184 to 204 (LDGTRNGIFFTPLFLCLGVLV). Topologically, residues 205–216 (RKQSEKRSLSKT) are cytoplasmic. Residues 217 to 237 (ALFFLISLIGLLIESAYLHGF) traverse the membrane as a helical segment. At 238-244 (SIPKHDS) the chain is on the extracellular side. Residues 245–265 (MYLFLPVVLFFLFPLILRWHP) form a helical membrane-spanning segment. The Cytoplasmic portion of the chain corresponds to 266-274 (HRTWKHPGQ). The helical transmembrane segment at 275-295 (LSLWLYLLHPYTIAGTHFLSQ) threads the bilayer. The Extracellular portion of the chain corresponds to 296 to 301 (KISILQ). The chain crosses the membrane as a helical span at residues 302-322 (NNLINYLVVLILTIGFICLFL). Residues 323–698 (RQKHSWFRHK…IGPRVSARIK (376 aa)) are Cytoplasmic-facing. The tract at residues 332 to 698 (KQTTPVKRAV…IGPRVSARIK (367 aa)) is racemase. Lys371 functions as the Proton acceptor in the catalytic mechanism. N6-(pyridoxal phosphate)lysine is present on Lys371. Residue Arg465 participates in substrate binding. The Proton acceptor role is filled by Tyr597. Substrate is bound at residue Met646.

It in the N-terminal section; belongs to the acyltransferase 3 family. This sequence in the C-terminal section; belongs to the alanine racemase family. In terms of assembly, homodimer. It depends on pyridoxal 5'-phosphate as a cofactor.

Its subcellular location is the cell membrane. The catalysed reaction is L-alanine = D-alanine. It catalyses the reaction L-serine = D-serine. The protein operates within amino-acid biosynthesis; D-alanine biosynthesis; D-alanine from L-alanine: step 1/1. Catalyzes the interconversion of L-serine and D-serine, and L-alanine and D-alanine. L-alanine is racemized at a rate that is 14% of that of L-serine. Together with VanC/VanC1 and VanXYC, required for vancomycin resistance in E.gallinarum strain BM4174. This chain is Serine/alanine racemase, found in Enterococcus gallinarum.